The primary structure comprises 545 residues: Chaperonin GroEL (545 aa).

ATP is bound by residues 30–33 (TLGP), Lys-51, 87–91 (DGTTT), Gly-415, 479–481 (NAA), and Asp-495.

Belongs to the chaperonin (HSP60) family. Forms a cylinder of 14 subunits composed of two heptameric rings stacked back-to-back. Interacts with the co-chaperonin GroES.

The protein localises to the cytoplasm. It carries out the reaction ATP + H2O + a folded polypeptide = ADP + phosphate + an unfolded polypeptide.. In terms of biological role, together with its co-chaperonin GroES, plays an essential role in assisting protein folding. The GroEL-GroES system forms a nano-cage that allows encapsulation of the non-native substrate proteins and provides a physical environment optimized to promote and accelerate protein folding. The chain is Chaperonin GroEL from Cellvibrio japonicus (strain Ueda107) (Pseudomonas fluorescens subsp. cellulosa).